The sequence spans 503 residues: 12-dehydrotetracycline 5-monooxygenase/anhydrotetracycline 6-monooxygenase (503 aa).

FAD is bound by residues threonine 13, 32-33, leucine 44, glutamine 99, valine 123, threonine 160, aspartate 288, and 301-302; these read ER and LN.

Belongs to the PheA/TfdB FAD monooxygenase family. As to quaternary structure, monomer. Requires FAD as cofactor.

It catalyses the reaction 5a,11a-dehydrotetracycline + NADPH + O2 + H(+) = 5a,11a-dehydrooxytetracycline + NADP(+) + H2O. The enzyme catalyses anhydrotetracycline + NADPH + O2 + H(+) = 5a,11a-dehydrotetracycline + NADP(+) + H2O. It participates in antibiotic biosynthesis; oxytetracycline biosynthesis. Its function is as follows. Involved in the biosynthesis of the antibiotics oxytetracycline and tetracycline. OxyS starts by catalyzing the stereospecific hydroxylation of anhydrotetracycline at C(6) position to yield 5a,11a-dehydrotetracycline (12-dehydrotetracycline). If the released product is captured by OxyR, it is reduced to tetracycline. However, if the released product is recaptured by OxyS, it performs an additional hydroxylation at C(5), producing 5a,11a-dehydrooxytetracycline, which, following the action of OxyR becomes oxytetracycline. This Streptomyces rimosus subsp. rimosus (strain ATCC 10970 / DSM 40260 / JCM 4667 / NRRL 2234) protein is 12-dehydrotetracycline 5-monooxygenase/anhydrotetracycline 6-monooxygenase.